The primary structure comprises 195 residues: CASP-like protein 1B1 (195 aa).

The Cytoplasmic segment spans residues 1 to 15; it reads MAKLALAATSGKSCK. A helical membrane pass occupies residues 16-36; it reads ILLGLRLLAFSATLSAAIVMG. At 37–67 the chain is on the extracellular side; it reads LNKETETFVVGKVGNTPIKATFTAKFDHTPA. The chain crosses the membrane as a helical span at residues 68 to 88; it reads FVFFVVANAMVSFHNLLMIAL. The Cytoplasmic segment spans residues 89–104; that stretch reads QIFGGKMEFTGFRLLS. Residues 105–125 form a helical membrane-spanning segment; sequence VAILDMLNVTLISAAANAAAF. The Extracellular segment spans residues 126–154; that stretch reads MAEVGKNGNKHARWDKICDRFATYCDHGA. The helical transmembrane segment at 155–175 threads the bilayer; it reads GALIAAFAGVILMLIISAASI. Over 176 to 195 the chain is Cytoplasmic; that stretch reads SRLAQQNKCCSTTASPSVVP.

This sequence belongs to the Casparian strip membrane proteins (CASP) family. As to quaternary structure, homodimer and heterodimers.

It localises to the cell membrane. This is CASP-like protein 1B1 from Arabidopsis lyrata subsp. lyrata (Lyre-leaved rock-cress).